The chain runs to 156 residues: Small ribosomal subunit protein uS7 (156 aa).

This sequence belongs to the universal ribosomal protein uS7 family. As to quaternary structure, part of the 30S ribosomal subunit. Contacts proteins S9 and S11.

One of the primary rRNA binding proteins, it binds directly to 16S rRNA where it nucleates assembly of the head domain of the 30S subunit. Is located at the subunit interface close to the decoding center, probably blocks exit of the E-site tRNA. The chain is Small ribosomal subunit protein uS7 from Syntrophotalea carbinolica (strain DSM 2380 / NBRC 103641 / GraBd1) (Pelobacter carbinolicus).